The following is a 297-amino-acid chain: N-acetylmuramic acid 6-phosphate etherase (297 aa).

An SIS domain is found at 55–218 (ATDALKSGGR…STGAMVKFGK (164 aa)). Glu-83 functions as the Proton donor in the catalytic mechanism. Residue Glu-114 is part of the active site.

Belongs to the GCKR-like family. MurNAc-6-P etherase subfamily. Homodimer.

The enzyme catalyses N-acetyl-D-muramate 6-phosphate + H2O = N-acetyl-D-glucosamine 6-phosphate + (R)-lactate. Its pathway is amino-sugar metabolism; 1,6-anhydro-N-acetylmuramate degradation. It functions in the pathway amino-sugar metabolism; N-acetylmuramate degradation. The protein operates within cell wall biogenesis; peptidoglycan recycling. Specifically catalyzes the cleavage of the D-lactyl ether substituent of MurNAc 6-phosphate, producing GlcNAc 6-phosphate and D-lactate. Together with AnmK, is also required for the utilization of anhydro-N-acetylmuramic acid (anhMurNAc) either imported from the medium or derived from its own cell wall murein, and thus plays a role in cell wall recycling. The sequence is that of N-acetylmuramic acid 6-phosphate etherase from Enterobacter sp. (strain 638).